Consider the following 34-residue polypeptide: GIPCFPSSLKRLLIIVVVIVLVVVVIVGALLMGL.

Cys-4 carries S-palmitoyl cysteine lipidation.

It localises to the secreted. The protein resides in the extracellular space. Its subcellular location is the surface film. Pulmonary surfactant associated proteins promote alveolar stability by lowering the surface tension at the air-liquid interface in the peripheral air spaces. This is Surfactant protein C (SFTPC) from Canis lupus familiaris (Dog).